The primary structure comprises 585 residues: Zinc finger protein 614 (585 aa).

The region spanning 8 to 79 (LTLEDVAVEF…DAKIQNKNCP (72 aa)) is the KRAB domain. The C2H2-type 1; atypical zinc finger occupies 205-227 (HACIECEQTFLRKSQLIYHENIC). The segment at 257–281 (KICIPNEYRKGSTVKSSLITHQQTH) adopts a C2H2-type 2; degenerate zinc-finger fold. C2H2-type zinc fingers lie at residues 287 to 309 (YMCS…QRTH), 315 to 337 (YVCK…QRTH), 343 to 365 (YICS…QRTH), 371 to 393 (YMCS…QRSH), 399 to 421 (YICS…QRTH), 427 to 449 (YICN…QRTH), 455 to 477 (YECN…ERCH), 483 to 505 (FVCT…QRIH), 511 to 533 (YECN…QRTH), and 539 to 561 (YGCS…KKMH).

This sequence belongs to the krueppel C2H2-type zinc-finger protein family.

The protein resides in the nucleus. May be involved in transcriptional regulation. This Homo sapiens (Human) protein is Zinc finger protein 614 (ZNF614).